Consider the following 300-residue polypeptide: Matrix protein (300 aa).

A disordered region spans residues 1-36; it reads MHMFPLGVVEDSDPPGPPIGRASGSPPPGAGRSTAK.

In terms of assembly, homodimer. Dimerization is critical for virion formation. Interacts with host ANP32B.

The protein resides in the virion. The protein localises to the host cell membrane. The M protein has a crucial role in virus assembly and interacts with the RNP complex as well as with the viral membrane. Associates with phosphatidylserine (PS) and phosphatidylinositol 4,5-bisphosphate (PIP2) at the plasma membrane. Interaction with PIP2 triggers matrix protein lattice polymerization. Matrix proteins induce host membrane deformation and curvature necessary for virion assembly/budding. The protein is Matrix protein (M) of Measles virus (strain Yamagata-1) (MeV).